Here is a 364-residue protein sequence, read N- to C-terminus: tRNA-specific 2-thiouridylase MnmA (364 aa).

Residues 12 to 19 (GMSGGVDS) and Met-38 contribute to the ATP site. An interaction with target base in tRNA region spans residues 98-100 (NPD). The Nucleophile role is filled by Cys-103. Residues Cys-103 and Cys-199 are joined by a disulfide bond. Gly-127 is a binding site for ATP. The tract at residues 149–151 (KDQ) is interaction with tRNA. Residue Cys-199 is the Cysteine persulfide intermediate of the active site. The interaction with tRNA stretch occupies residues 307-308 (RY).

Belongs to the MnmA/TRMU family.

It is found in the cytoplasm. The enzyme catalyses S-sulfanyl-L-cysteinyl-[protein] + uridine(34) in tRNA + AH2 + ATP = 2-thiouridine(34) in tRNA + L-cysteinyl-[protein] + A + AMP + diphosphate + H(+). Catalyzes the 2-thiolation of uridine at the wobble position (U34) of tRNA, leading to the formation of s(2)U34. This chain is tRNA-specific 2-thiouridylase MnmA, found in Shouchella clausii (strain KSM-K16) (Alkalihalobacillus clausii).